We begin with the raw amino-acid sequence, 160 residues long: Ureidoglycolate lyase (160 aa).

Belongs to the ureidoglycolate lyase family. In terms of assembly, homodimer. The cofactor is Ni(2+).

The catalysed reaction is (S)-ureidoglycolate = urea + glyoxylate. Its pathway is nitrogen metabolism; (S)-allantoin degradation. In terms of biological role, catalyzes the catabolism of the allantoin degradation intermediate (S)-ureidoglycolate, generating urea and glyoxylate. Involved in the anaerobic utilization of allantoin as sole nitrogen source. Reinforces the induction of genes involved in the degradation of allantoin and glyoxylate by producing glyoxylate. The polypeptide is Ureidoglycolate lyase (Escherichia coli O6:H1 (strain CFT073 / ATCC 700928 / UPEC)).